A 214-amino-acid polypeptide reads, in one-letter code: Urease accessory protein UreG 2 (214 aa).

Position 22–29 (22–29 (GPVGSGKT)) interacts with GTP.

The protein belongs to the SIMIBI class G3E GTPase family. UreG subfamily. As to quaternary structure, homodimer. UreD, UreF and UreG form a complex that acts as a GTP-hydrolysis-dependent molecular chaperone, activating the urease apoprotein by helping to assemble the nickel containing metallocenter of UreC. The UreE protein probably delivers the nickel.

Its subcellular location is the cytoplasm. Functionally, facilitates the functional incorporation of the urease nickel metallocenter. This process requires GTP hydrolysis, probably effectuated by UreG. The sequence is that of Urease accessory protein UreG 2 from Bradyrhizobium sp. (strain BTAi1 / ATCC BAA-1182).